Consider the following 334-residue polypeptide: N-acetyl-gamma-glutamyl-phosphate reductase (334 aa).

Cys154 is a catalytic residue.

It belongs to the NAGSA dehydrogenase family. Type 1 subfamily.

It is found in the cytoplasm. The enzyme catalyses N-acetyl-L-glutamate 5-semialdehyde + phosphate + NADP(+) = N-acetyl-L-glutamyl 5-phosphate + NADPH + H(+). It functions in the pathway amino-acid biosynthesis; L-arginine biosynthesis; N(2)-acetyl-L-ornithine from L-glutamate: step 3/4. Catalyzes the NADPH-dependent reduction of N-acetyl-5-glutamyl phosphate to yield N-acetyl-L-glutamate 5-semialdehyde. This Escherichia coli O157:H7 protein is N-acetyl-gamma-glutamyl-phosphate reductase.